Consider the following 123-residue polypeptide: MPQASPTSAGHAAENQALEFLQGQGLRLLTRNWRCKGGELDLVMLDTDTVVFVEVRYRLHAGFGGALGSIDGRKQKRLVHAASLFLLKESCWANHPCRFDVVALQGSHHAGRPLQWLKNAFEC.

Belongs to the UPF0102 family.

This is UPF0102 protein PputW619_0932 from Pseudomonas putida (strain W619).